The chain runs to 177 residues: Peptide methionine sulfoxide reductase MsrA 2 (177 aa).

Residue Cys12 is part of the active site.

The protein belongs to the MsrA Met sulfoxide reductase family.

It catalyses the reaction L-methionyl-[protein] + [thioredoxin]-disulfide + H2O = L-methionyl-(S)-S-oxide-[protein] + [thioredoxin]-dithiol. The catalysed reaction is [thioredoxin]-disulfide + L-methionine + H2O = L-methionine (S)-S-oxide + [thioredoxin]-dithiol. Has an important function as a repair enzyme for proteins that have been inactivated by oxidation. Catalyzes the reversible oxidation-reduction of methionine sulfoxide in proteins to methionine. This is Peptide methionine sulfoxide reductase MsrA 2 (msrA2) from Staphylococcus aureus (strain NCTC 8325 / PS 47).